The following is a 569-amino-acid chain: Glucose-6-phosphate isomerase, cytosolic 2 (569 aa).

Glu360 acts as the Proton donor in catalysis. Residues His391 and Lys516 contribute to the active site.

The protein belongs to the GPI family. As to quaternary structure, homodimer.

It localises to the cytoplasm. It catalyses the reaction alpha-D-glucose 6-phosphate = beta-D-fructose 6-phosphate. It participates in carbohydrate degradation; glycolysis; D-glyceraldehyde 3-phosphate and glycerone phosphate from D-glucose: step 2/4. The protein is Glucose-6-phosphate isomerase, cytosolic 2 (PGIC2) of Clarkia concinna (Red ribbons).